Consider the following 298-residue polypeptide: Short-chain dehydrogenase/reductase prx6 (298 aa).

Residues I27, D70, N97, Y174, K178, V208, and T210 each coordinate NADP(+). The Proton acceptor role is filled by Y174. The active-site Lowers pKa of active site Tyr is the K178.

Belongs to the short-chain dehydrogenases/reductases (SDR) family.

The protein operates within sesquiterpene biosynthesis. In terms of biological role, short-chain dehydrogenase/reductase; part of the gene cluster that mediates the biosynthesis of PR-toxin, a bicyclic sesquiterpene belonging to the eremophilane class and acting as a mycotoxin. The first step of the pathway is catalyzed by the aristolochene synthase which performs the cyclization of trans,trans-farnesyl diphosphate (FPP) to the bicyclic sesquiterpene aristolochene. Following the formation of aristolochene, the non-oxygenated aristolochene is converted to the trioxygenated intermediate eremofortin B, via 7-epi-neopetasone. This conversion appears to involve three enzymes, a hydroxysterol oxidase-like enzyme, the quinone-oxidase prx3 that forms the quinone-type-structure in the bicyclic nucleus of aristolochene with the C8-oxo group and the C-3 hydroxyl group, and the P450 monooxygenase prx9 that introduces the epoxide at the double bond between carbons 1 and 2. No monoxy or dioxy-intermediates have been reported to be released to the broth, so these three early oxidative reactions may be coupled together. Eremofortin B is further oxidized by another P450 monooxygenase, that introduces a second epoxide between carbons 7 and 11 prior to acetylation to eremofortin A by the acetyltransferase prx11. The second epoxidation may be performed by a second P450 monooxygenase. After the acetylation step, eremofortin A is converted to eremofortin C and then to PR-toxin. First the conversion of eremofortin A to eremofortin C proceeds by oxidation of the side chain of the molecule at C-12 and is catalyzed by the short-chain oxidoreductase prx1. The cytochrome P450 monooxygenase prx8 also plays a role in this step. The primary alcohol formed at C-12 is finally oxidized by the short-chain alcohol dehydrogenase prx4 that forms PR-toxin. The polypeptide is Short-chain dehydrogenase/reductase prx6 (Penicillium rubens (strain ATCC 28089 / DSM 1075 / NRRL 1951 / Wisconsin 54-1255) (Penicillium chrysogenum)).